We begin with the raw amino-acid sequence, 220 residues long: uncharacterized protein (220 aa).

The next 4 helical transmembrane spans lie at 9 to 29, 54 to 74, 105 to 125, and 177 to 197; these read LWIT…GSTQ, YAVH…FLAV, VQGI…IHLW, and VLAV…VIEM.

The protein resides in the cell membrane. This is an uncharacterized protein from Sinorhizobium fredii (strain NBRC 101917 / NGR234).